The sequence spans 108 residues: MLYPIFIFILAGLCEIGGGYLIWLWLREGQSSLVGLIGGAILMLYGVIATFQSFPSFGRVYAAYGGVFIIMSLIFAMVVDKQMPDKYDVIGAIICIVGVLVMLLPSRA.

Helical transmembrane passes span Ile5 to Trp25, Ser31 to Phe51, Val60 to Asp80, and Lys86 to Ser106.

The protein belongs to the UPF0060 family.

Its subcellular location is the cell membrane. This chain is UPF0060 membrane protein SA2130, found in Staphylococcus aureus (strain N315).